Consider the following 199-residue polypeptide: Protein GrpE (199 aa).

The segment covering M1–N24 has biased composition (basic and acidic residues). Residues M1 to E52 are disordered.

It belongs to the GrpE family. As to quaternary structure, homodimer.

The protein resides in the cytoplasm. Its function is as follows. Participates actively in the response to hyperosmotic and heat shock by preventing the aggregation of stress-denatured proteins, in association with DnaK and GrpE. It is the nucleotide exchange factor for DnaK and may function as a thermosensor. Unfolded proteins bind initially to DnaJ; upon interaction with the DnaJ-bound protein, DnaK hydrolyzes its bound ATP, resulting in the formation of a stable complex. GrpE releases ADP from DnaK; ATP binding to DnaK triggers the release of the substrate protein, thus completing the reaction cycle. Several rounds of ATP-dependent interactions between DnaJ, DnaK and GrpE are required for fully efficient folding. The polypeptide is Protein GrpE (Legionella pneumophila (strain Lens)).